A 237-amino-acid chain; its full sequence is Ribonuclease PH (237 aa).

Residues arginine 86 and 124–126 (GTR) each bind phosphate.

The protein belongs to the RNase PH family. In terms of assembly, homohexameric ring arranged as a trimer of dimers.

It carries out the reaction tRNA(n+1) + phosphate = tRNA(n) + a ribonucleoside 5'-diphosphate. Phosphorolytic 3'-5' exoribonuclease that plays an important role in tRNA 3'-end maturation. Removes nucleotide residues following the 3'-CCA terminus of tRNAs; can also add nucleotides to the ends of RNA molecules by using nucleoside diphosphates as substrates, but this may not be physiologically important. Probably plays a role in initiation of 16S rRNA degradation (leading to ribosome degradation) during starvation. The chain is Ribonuclease PH from Roseobacter denitrificans (strain ATCC 33942 / OCh 114) (Erythrobacter sp. (strain OCh 114)).